A 334-amino-acid polypeptide reads, in one-letter code: Putative violet-sensitive opsin (334 aa).

At 1-29 (MGKYFYLYENISKVGPYDGPQYYLAPTWA) the chain is on the extracellular side. N-linked (GlcNAc...) asparagine glycosylation occurs at N10. Residues 30–54 (FYLQAAFMGFVFFVGTPLNFVVLLA) form a helical membrane-spanning segment. The Cytoplasmic portion of the chain corresponds to 55–66 (TAKYKKLRVPLN). The helical transmembrane segment at 67-88 (YILVNITFAGFIFVTFSVSQVF) threads the bilayer. The Extracellular portion of the chain corresponds to 89–106 (LASVRGYYFFGQTLCALE). Cysteines 103 and 179 form a disulfide. A helical membrane pass occupies residues 107–126 (AAVGAVAGLVTSWSLAVLSF). The Cytoplasmic segment spans residues 127–145 (ERYLVICKPFGAFKFGSNH). Residues 146-168 (ALAAVIFTWFMGVVRCPPFFGWS) form a helical membrane-spanning segment. At 169–194 (RYIPEGLGCSCGPDWYTNCEEFSCAS) the chain is on the extracellular side. A helical membrane pass occupies residues 195 to 222 (YSKFLLVTCFICPITIIIFSYSQLLGAL). Over 223 to 244 (RAVAAQQAESASTQKAEKEVSR) the chain is Cytoplasmic. A helical transmembrane segment spans residues 245-272 (MIIVMVASFVTCYGPYALTAQYYAYSQD). Topologically, residues 273 to 279 (ENKDYRL) are extracellular. A helical membrane pass occupies residues 280–301 (VTIPAFFSKSSCVYNPLIYAFM). Position 288 is an N6-(retinylidene)lysine (K288). Topologically, residues 302–334 (NKQFNGCIMEMVFGKKMEEASEVSSKTEVSTDS) are cytoplasmic.

This sequence belongs to the G-protein coupled receptor 1 family. Opsin subfamily. Post-translationally, phosphorylated on some or all of the serine and threonine residues present in the C-terminal region. The three color pigments are found in the cone photoreceptor cells.

Its subcellular location is the membrane. In terms of biological role, visual pigments are the light-absorbing molecules that mediate vision. They consist of an apoprotein, opsin, covalently linked to cis-retinal. This is Putative violet-sensitive opsin from Oryzias latipes (Japanese rice fish).